The primary structure comprises 590 residues: Aspartate--tRNA(Asp/Asn) ligase (590 aa).

L-aspartate is bound at residue E172. Residues 196–199 (QLFK) are aspartate. Position 218 (R218) interacts with L-aspartate. Residues 218 to 220 (RDE) and Q227 contribute to the ATP site. H449 lines the L-aspartate pocket. ATP is bound at residue E484. R491 contributes to the L-aspartate binding site. 536–539 (GVDR) is an ATP binding site.

Belongs to the class-II aminoacyl-tRNA synthetase family. Type 1 subfamily. As to quaternary structure, homodimer.

It localises to the cytoplasm. The enzyme catalyses tRNA(Asx) + L-aspartate + ATP = L-aspartyl-tRNA(Asx) + AMP + diphosphate. Its function is as follows. Aspartyl-tRNA synthetase with relaxed tRNA specificity since it is able to aspartylate not only its cognate tRNA(Asp) but also tRNA(Asn). Reaction proceeds in two steps: L-aspartate is first activated by ATP to form Asp-AMP and then transferred to the acceptor end of tRNA(Asp/Asn). The polypeptide is Aspartate--tRNA(Asp/Asn) ligase (Francisella tularensis subsp. tularensis (strain WY96-3418)).